A 380-amino-acid polypeptide reads, in one-letter code: Bifunctional dihydropteroate synthase/dihydropteroate reductase (380 aa).

The dihydropteroate reductase stretch occupies residues 1–104 (MIVKRLNPDA…SQPFGLKHLA (104 aa)). Residues 105–380 (QELKSHLKAP…KVFKSLEETD (276 aa)) are dihydropteroate synthase. The 253-residue stretch at 119 to 371 (PQIMAVLNLT…DIDEHIDLIK (253 aa)) folds into the Pterin-binding domain. Asn-126 lines the Mg(2+) pocket. Residues Asp-202, Asn-221, Asp-289, Lys-325, and 359-361 (RVH) each bind (7,8-dihydropterin-6-yl)methyl diphosphate.

This sequence in the C-terminal section; belongs to the DHPS family. Requires FAD as cofactor. It depends on FMN as a cofactor. Mg(2+) serves as cofactor.

The catalysed reaction is (7,8-dihydropterin-6-yl)methyl diphosphate + 4-aminobenzoate = 7,8-dihydropteroate + diphosphate. It catalyses the reaction (6S)-5,6,7,8-tetrahydropteroate + NAD(+) = 7,8-dihydropteroate + NADH + H(+). It functions in the pathway cofactor biosynthesis; tetrahydrofolate biosynthesis; 7,8-dihydrofolate from 2-amino-4-hydroxy-6-hydroxymethyl-7,8-dihydropteridine diphosphate and 4-aminobenzoate: step 1/2. Bifunctional enzyme that catalyzes the formation of dihydropteroate, the immediate precursor of folic acid and the reduction of dihydropteroate to tetrahydropteroate. The polypeptide is Bifunctional dihydropteroate synthase/dihydropteroate reductase (Helicobacter pylori (strain ATCC 700392 / 26695) (Campylobacter pylori)).